The chain runs to 517 residues: Protein disulfide isomerase-like 1-2 (517 aa).

Residues 1–23 (MAVNLVLSFALAILISSSPTAVG) form the signal peptide. The Thioredoxin 1 domain occupies 24–143 (VDATEELKEA…IVEYLKRQVG (120 aa)). The N-linked (GlcNAc...) asparagine glycan is linked to Asn41. Active-site nucleophile residues include Cys61 and Cys64. Residues Cys61 and Cys64 are joined by a disulfide bond. Asn301 is a glycosylation site (N-linked (GlcNAc...) asparagine). The Thioredoxin 2 domain maps to 357–484 (VEYGNLTPYV…IISFINENRG (128 aa)). Catalysis depends on nucleophile residues Cys407 and Cys410. Cys407 and Cys410 form a disulfide bridge. The Prevents secretion from ER signature appears at 514–517 (KDEL).

Belongs to the protein disulfide isomerase family.

Its subcellular location is the endoplasmic reticulum lumen. The catalysed reaction is Catalyzes the rearrangement of -S-S- bonds in proteins.. Acts as a protein-folding catalyst that interacts with nascent polypeptides to catalyze the formation, isomerization, and reduction or oxidation of disulfide bonds. May play a role in storage protein biogenesis. This Oryza sativa subsp. japonica (Rice) protein is Protein disulfide isomerase-like 1-2 (PDIL1-2).